The primary structure comprises 87 residues: Phosphoribosyl-ATP pyrophosphatase (87 aa).

It belongs to the PRA-PH family.

It is found in the cytoplasm. The enzyme catalyses 1-(5-phospho-beta-D-ribosyl)-ATP + H2O = 1-(5-phospho-beta-D-ribosyl)-5'-AMP + diphosphate + H(+). The protein operates within amino-acid biosynthesis; L-histidine biosynthesis; L-histidine from 5-phospho-alpha-D-ribose 1-diphosphate: step 2/9. This Corynebacterium glutamicum (strain ATCC 13032 / DSM 20300 / JCM 1318 / BCRC 11384 / CCUG 27702 / LMG 3730 / NBRC 12168 / NCIMB 10025 / NRRL B-2784 / 534) protein is Phosphoribosyl-ATP pyrophosphatase (hisE).